The primary structure comprises 109 residues: Glutaredoxin-8 (109 aa).

The 105-residue stretch at 5–109 (VTKAEEMIKS…EELTKIGLLP (105 aa)) folds into the Glutaredoxin domain. Cysteine 25 and cysteine 28 are disulfide-bonded.

Belongs to the glutaredoxin family. Monomer.

The protein resides in the cytoplasm. Glutathione-dependent oxidoreductase with lower activity compared to the other members of the glutaredoxin family. The disulfide bond functions as an electron carrier in the glutathione-dependent synthesis of deoxyribonucleotides by the enzyme ribonucleotide reductase. The sequence is that of Glutaredoxin-8 (GRX8) from Saccharomyces cerevisiae (strain ATCC 204508 / S288c) (Baker's yeast).